The following is a 1769-amino-acid chain: Gamma-tubulin complex component 6 (1769 aa).

Disordered stretches follow at residues 809–842 (EAQQ…HSCD), 859–881 (STPS…PFST), and 1284–1360 (TVCS…AEAR). The segment covering 820 to 831 (FPSTGSQVTSTG) has biased composition (polar residues). A compositionally biased stretch (basic and acidic residues) spans 1314–1326 (PEEKGPGKSRDAE). Positions 1332 to 1343 (LPSSSQEDTAVP) are enriched in polar residues.

The protein belongs to the TUBGCP family. As to quaternary structure, component of the gamma-tubulin ring complex (gTuRC) consisting of TUBGCP2, TUBGCP3, TUBGCP4, TUBGCP5 and TUBGCP6 and gamma-tubulin TUBG1 or TUBG2. TUBGCP2, TUBGCP3, TUBGCP4, TUBGCP5 and TUBGCP6 assemble in a 5:5:2:1:1 stoichiometry; each is associated with a gamma-tubulin, thereby arranging 14 gamma-tubulins in a helical manner. Gamma-tubulin at the first position is blocked by TUBGCP3 at the last position, allowing 13 protafilaments to grow into a microtubule. The gTuRC (via TUBGCP3 and TUBGCP6) interacts with ACTB and MZT1; the interactions form a luminal bridge that stabilizes the initial structure during complex assembly. The gTuRC (via TUBGCP2) interacts with MZT2A/MZT2B and CDK5RAP2 (via CM1 motif); the interactions play a role in gTuRC activation.

The protein localises to the cytoplasm. It localises to the cytoskeleton. The protein resides in the microtubule organizing center. Its subcellular location is the centrosome. Its function is as follows. Component of the gamma-tubulin ring complex (gTuRC) which mediates microtubule nucleation. The gTuRC regulates the minus-end nucleation of alpha-beta tubulin heterodimers that grow into microtubule protafilaments, a critical step in centrosome duplication and spindle formation. The sequence is that of Gamma-tubulin complex component 6 (Tubgcp6) from Mus musculus (Mouse).